Here is a 152-residue protein sequence, read N- to C-terminus: Endodeoxyribonuclease 1 (152 aa).

It carries out the reaction Endonucleolytic cleavage to 5'-phosphooligonucleotide end-products.. Its function is as follows. Endodeoxyribonuclease I, which is expressed in the late stage, is necessary for T3 genetic recombination and the breakdown of host DNA. In the early stage of infection, T3 DNA replicates as a linear monomer. In the late stage, the T3 DNA replicates via linear concatemers several genomes in length. The gene 3 product has also been implicated in the maturation of these concatemers. The polypeptide is Endodeoxyribonuclease 1 (3) (Enterobacteria phage T3 (Bacteriophage T3)).